A 1389-amino-acid chain; its full sequence is DNA-directed RNA polymerase subunit beta (1389 aa).

This sequence belongs to the RNA polymerase beta chain family. In terms of assembly, in plastids the minimal PEP RNA polymerase catalytic core is composed of four subunits: alpha, beta, beta', and beta''. When a (nuclear-encoded) sigma factor is associated with the core the holoenzyme is formed, which can initiate transcription.

The protein resides in the plastid. It localises to the chloroplast. It catalyses the reaction RNA(n) + a ribonucleoside 5'-triphosphate = RNA(n+1) + diphosphate. In terms of biological role, DNA-dependent RNA polymerase catalyzes the transcription of DNA into RNA using the four ribonucleoside triphosphates as substrates. The sequence is that of DNA-directed RNA polymerase subunit beta from Phaeodactylum tricornutum (strain CCAP 1055/1).